A 129-amino-acid polypeptide reads, in one-letter code: Small ribosomal subunit protein uS11 (129 aa).

The protein belongs to the universal ribosomal protein uS11 family. As to quaternary structure, part of the 30S ribosomal subunit. Interacts with proteins S7 and S18. Binds to IF-3.

In terms of biological role, located on the platform of the 30S subunit, it bridges several disparate RNA helices of the 16S rRNA. Forms part of the Shine-Dalgarno cleft in the 70S ribosome. This is Small ribosomal subunit protein uS11 from Desulfitobacterium hafniense (strain DSM 10664 / DCB-2).